Here is a 332-residue protein sequence, read N- to C-terminus: Ketol-acid reductoisomerase (NADP(+)) (332 aa).

Positions 1–182 (MATIYRDKDA…GGTRAGVLET (182 aa)) constitute a KARI N-terminal Rossmann domain. Residues 25 to 28 (YGNQ), Lys-49, Ser-51, and 83 to 86 (DELQ) each bind NADP(+). His-108 is an active-site residue. Gly-134 serves as a coordination point for NADP(+). The KARI C-terminal knotted domain maps to 183–328 (TFAEETETDL…AELRAMMPWL (146 aa)). Asp-191, Glu-195, Glu-227, and Glu-231 together coordinate Mg(2+). Residue Ser-252 participates in substrate binding.

It belongs to the ketol-acid reductoisomerase family. The cofactor is Mg(2+).

The catalysed reaction is (2R)-2,3-dihydroxy-3-methylbutanoate + NADP(+) = (2S)-2-acetolactate + NADPH + H(+). The enzyme catalyses (2R,3R)-2,3-dihydroxy-3-methylpentanoate + NADP(+) = (S)-2-ethyl-2-hydroxy-3-oxobutanoate + NADPH + H(+). The protein operates within amino-acid biosynthesis; L-isoleucine biosynthesis; L-isoleucine from 2-oxobutanoate: step 2/4. Its pathway is amino-acid biosynthesis; L-valine biosynthesis; L-valine from pyruvate: step 2/4. Functionally, involved in the biosynthesis of branched-chain amino acids (BCAA). Catalyzes an alkyl-migration followed by a ketol-acid reduction of (S)-2-acetolactate (S2AL) to yield (R)-2,3-dihydroxy-isovalerate. In the isomerase reaction, S2AL is rearranged via a Mg-dependent methyl migration to produce 3-hydroxy-3-methyl-2-ketobutyrate (HMKB). In the reductase reaction, this 2-ketoacid undergoes a metal-dependent reduction by NADPH to yield (R)-2,3-dihydroxy-isovalerate. This Methanothrix thermoacetophila (strain DSM 6194 / JCM 14653 / NBRC 101360 / PT) (Methanosaeta thermophila) protein is Ketol-acid reductoisomerase (NADP(+)).